Here is a 446-residue protein sequence, read N- to C-terminus: MSIQIKQSTMVRPAEETPNKSLWLSKIDMILRTPYSHTGAVLIYKQPDNNEDNIHPSSSMYFDANILIEALSKALVPYYPMAGRLKINGDRYEIDCNAEGALFVEAESSHVLEDFGDFRPNDELHRVMVPTCDYSKGISSFPLLMVQLTRFRCGGVSIGFAQHHHACDGMSHFEFNNSWARIAKGLLPALEPVHDRYLHLRLRNPPQIKYTHSQFEPFVPSLPNELLDGKTNKSQTLFKLSREQINTLKQKLDLSSNTTTRLSTYEVVAGHVWRSVSKARGLSDHEEIKLIMPVDGRSRINNPSLPKGYCGNVVFLAVCTATVGDLSCNPLTDTAGKVQEALKGLDDDYLRSAIDHTESKPDLPVPYMGSPEKTLYPNVLVNSWGRIPYQAMDFGWGSPTFFGISNIFYDGQCFLIPSQNGDGSMTLAINLFSSHLSLFKKYFYDF.

Catalysis depends on proton acceptor residues H164 and D393.

Belongs to the plant acyltransferase family. Post-translationally, N-terminus is blocked.

It carries out the reaction anthranilate + benzoyl-CoA = N-benzoylanthranilate + CoA. It functions in the pathway phytoalexin biosynthesis; methoxydianthramide B biosynthesis. In terms of biological role, catalyzes the formation of N-benzoylanthranilate, in the course of methoxydianthramide B, a phytoalexin. Phytoalexins are produced in response to infection by parasites, and are essential for the expression of disease resistance. This is Anthranilate N-benzoyltransferase protein 2 (HCBT2) from Dianthus caryophyllus (Carnation).